The primary structure comprises 61 residues: Metallothionein-1E (61 aa).

Met-1 is modified (N-acetylmethionine). Positions 1–29 (MDPNCSCPTGGSCSCAGSCTCKACRCTSC) are beta. Cys-5, Cys-7, Cys-13, Cys-15, Cys-19, Cys-21, Cys-24, Cys-26, Cys-29, Cys-33, Cys-34, Cys-36, Cys-37, Cys-41, Cys-44, Cys-48, Cys-50, Cys-57, Cys-59, and Cys-60 together coordinate a divalent metal cation. The interval 30–61 (KKSCCSCCPVGCAKCAQGCICKGASDKCSCCA) is alpha.

This sequence belongs to the metallothionein superfamily. Type 1 family. As to quaternary structure, monomer.

Metallothioneins have a high content of cysteine residues that bind various heavy metals; these proteins are transcriptionally regulated by both heavy metals and glucocorticoids. This is Metallothionein-1E (MT1E) from Sus scrofa (Pig).